The sequence spans 367 residues: Phosphoribosylaminoimidazole-succinocarboxamide synthase (367 aa).

This sequence belongs to the SAICAR synthetase family.

It catalyses the reaction 5-amino-1-(5-phospho-D-ribosyl)imidazole-4-carboxylate + L-aspartate + ATP = (2S)-2-[5-amino-1-(5-phospho-beta-D-ribosyl)imidazole-4-carboxamido]succinate + ADP + phosphate + 2 H(+). The protein operates within purine metabolism; IMP biosynthesis via de novo pathway; 5-amino-1-(5-phospho-D-ribosyl)imidazole-4-carboxamide from 5-amino-1-(5-phospho-D-ribosyl)imidazole-4-carboxylate: step 1/2. The protein is Phosphoribosylaminoimidazole-succinocarboxamide synthase of Shewanella baltica (strain OS185).